We begin with the raw amino-acid sequence, 565 residues long: Anaphase-promoting complex subunit 7 (565 aa).

TPR repeat units follow at residues 101-134 (EIEV…RQRT), 169-202 (LDAI…LDWL), 203-236 (SVWI…LRDN), 237-270 (VDLL…DPYL), 339-372 (VQAL…APCR), 373-406 (LDCY…LGAN), 407-441 (AQTL…RPDY), 442-474 (IKAV…NQSD), 475-508 (CVLH…DPND), and 509-531 (QKSL…TQEE). K229 is modified (N6-acetyllysine). Over residues 513–523 (EGMQKMEKEES) the composition is skewed to basic and acidic residues. Residues 513–565 (EGMQKMEKEESPTDATQEEDVDDMEGSGEEGDLEGSDSEAAQWADQEQWFGMQ) are disordered. Residues 528-549 (TQEEDVDDMEGSGEEGDLEGSD) show a composition bias toward acidic residues.

The protein belongs to the APC7 family. V-shaped homodimer. The mammalian APC/C is composed at least of 14 distinct subunits ANAPC1, ANAPC2, CDC27/APC3, ANAPC4, ANAPC5, CDC16/APC6, ANAPC7, CDC23/APC8, ANAPC10, ANAPC11, CDC26/APC12, ANAPC13, ANAPC15 and ANAPC16 that assemble into a complex of at least 19 chains with a combined molecular mass of around 1.2 MDa; APC/C interacts with FZR1 and FBXO5.

It localises to the cytoplasm. It is found in the cytoskeleton. Its subcellular location is the nucleus. The protein resides in the spindle. It functions in the pathway protein modification; protein ubiquitination. Functionally, component of the anaphase promoting complex/cyclosome (APC/C), a cell cycle-regulated E3 ubiquitin ligase that controls progression through mitosis and the G1 phase of the cell cycle. The APC/C complex acts by mediating ubiquitination and subsequent degradation of target proteins: it mainly mediates the formation of 'Lys-11'-linked polyubiquitin chains and, to a lower extent, the formation of 'Lys-48'- and 'Lys-63'-linked polyubiquitin chains. The APC/C complex catalyzes assembly of branched 'Lys-11'-/'Lys-48'-linked branched ubiquitin chains on target proteins. APC7 is not required for the assembly of the APC/C complex, but has an enzyme-substrate adapter activity mediating the processive ubiquitination of specific substrates. Involved in brain development through the specific ubiquitination and clearance of MKI67 from constitutive heterochromatin after neuronal progenitors exit mitosis. This chain is Anaphase-promoting complex subunit 7, found in Homo sapiens (Human).